An 80-amino-acid polypeptide reads, in one-letter code: Exodeoxyribonuclease 7 small subunit (80 aa).

It belongs to the XseB family. In terms of assembly, heterooligomer composed of large and small subunits.

It localises to the cytoplasm. The enzyme catalyses Exonucleolytic cleavage in either 5'- to 3'- or 3'- to 5'-direction to yield nucleoside 5'-phosphates.. Functionally, bidirectionally degrades single-stranded DNA into large acid-insoluble oligonucleotides, which are then degraded further into small acid-soluble oligonucleotides. This chain is Exodeoxyribonuclease 7 small subunit, found in Streptomyces avermitilis (strain ATCC 31267 / DSM 46492 / JCM 5070 / NBRC 14893 / NCIMB 12804 / NRRL 8165 / MA-4680).